A 317-amino-acid polypeptide reads, in one-letter code: Anamorsin homolog 2 (317 aa).

Positions 1–162 are N-terminal SAM-like domain; that stretch reads MAKKVGVLLF…KPSWDSASVF (162 aa). The segment at 163-229 is linker; the sequence is QLRKGSSQKG…EDDLLTEEDL (67 aa). Positions 240, 247, 250, and 252 each coordinate [2Fe-2S] cluster. The segment at 240–252 is fe-S binding site A; it reads CAPTKKACKNCTC. 4 residues coordinate [4Fe-4S] cluster: Cys278, Cys281, Cys289, and Cys292. Short sequence motifs (cx2C motif) lie at residues 278 to 281 and 289 to 292; these read CGSC and CAGC. Residues 278-292 form a fe-S binding site B region; it reads CGSCGLGDAFRCAGC.

The protein belongs to the anamorsin family. In terms of assembly, monomer. The cofactor is [2Fe-2S] cluster. [4Fe-4S] cluster serves as cofactor.

It localises to the cytoplasm. It is found in the mitochondrion intermembrane space. Functionally, component of the cytosolic iron-sulfur (Fe-S) protein assembly (CIA) machinery. Required for the maturation of extramitochondrial Fe-S proteins. Part of an electron transfer chain functioning in an early step of cytosolic Fe-S biogenesis, facilitating the de novo assembly of a [4Fe-4S] cluster on the cytosolic Fe-S scaffold complex. Electrons are transferred from NADPH via a FAD- and FMN-containing diflavin oxidoreductase. Together with the diflavin oxidoreductase, also required for the assembly of the diferric tyrosyl radical cofactor of ribonucleotide reductase (RNR), probably by providing electrons for reduction during radical cofactor maturation in the catalytic small subunit. The chain is Anamorsin homolog 2 from Physcomitrium patens (Spreading-leaved earth moss).